The primary structure comprises 217 residues: UPF0173 metal-dependent hydrolase MJ1163 (217 aa).

The protein belongs to the UPF0173 family.

This Methanocaldococcus jannaschii (strain ATCC 43067 / DSM 2661 / JAL-1 / JCM 10045 / NBRC 100440) (Methanococcus jannaschii) protein is UPF0173 metal-dependent hydrolase MJ1163.